The chain runs to 367 residues: Putative heat shock 70 kDa protein 7 (367 aa).

Belongs to the heat shock protein 70 family.

The protein is Putative heat shock 70 kDa protein 7 (HSPA7) of Homo sapiens (Human).